The chain runs to 471 residues: Metalloprotease TIKI homolog (471 aa).

The first 24 residues, 1 to 24 (MAAFTLWILVLNVFLLGFQARKLA), serve as a signal peptide directing secretion. The Extracellular segment spans residues 25–449 (SNLKFPIQKC…SRKAAASCTP (425 aa)). Asparagine 226, asparagine 235, asparagine 284, and asparagine 342 each carry an N-linked (GlcNAc...) asparagine glycan. The span at 369–402 (KAKKSLNTRRERRKGCRGRRKKSKRCQKKKKRKR) shows a compositional bias: basic residues. The tract at residues 369–406 (KAKKSLNTRRERRKGCRGRRKKSKRCQKKKKRKRPDYS) is disordered. A helical transmembrane segment spans residues 450 to 470 (IWTVSLALTCAVTCLLTYSGF). Arginine 471 is a topological domain (cytoplasmic).

Belongs to the TIKI family. Mn(2+) is required as a cofactor. Requires Co(2+) as cofactor.

It is found in the membrane. Its function is as follows. Metalloprotease. The polypeptide is Metalloprotease TIKI homolog (Nematostella vectensis (Starlet sea anemone)).